A 506-amino-acid polypeptide reads, in one-letter code: Glutamate--tRNA ligase (506 aa).

Residues Pro9–Gly19 carry the 'HIGH' region motif. The short motif at Lys251–Arg255 is the 'KMSKS' region element. Residue Lys254 coordinates ATP.

This sequence belongs to the class-I aminoacyl-tRNA synthetase family. Glutamate--tRNA ligase type 1 subfamily. In terms of assembly, monomer.

The protein resides in the cytoplasm. The catalysed reaction is tRNA(Glu) + L-glutamate + ATP = L-glutamyl-tRNA(Glu) + AMP + diphosphate. Functionally, catalyzes the attachment of glutamate to tRNA(Glu) in a two-step reaction: glutamate is first activated by ATP to form Glu-AMP and then transferred to the acceptor end of tRNA(Glu). In Treponema denticola (strain ATCC 35405 / DSM 14222 / CIP 103919 / JCM 8153 / KCTC 15104), this protein is Glutamate--tRNA ligase.